Here is a 340-residue protein sequence, read N- to C-terminus: Protein LSM14 homolog car-1 (340 aa).

One can recognise a Sm domain in the interval 1–81 (MSNQTPYIGS…IKDLIVCDTP (81 aa)). Over residues 101 to 125 (SRSAPASDGAPAASAGSSRAGTPSR) the composition is skewed to low complexity. A disordered region spans residues 101–148 (SRSAPASDGAPAASAGSSRAGTPSRNSPLGQIIQNQRPGRGGYQQNFQ). The segment covering 126-148 (NSPLGQIIQNQRPGRGGYQQNFQ) has biased composition (polar residues). Residues 178–214 (VNHREKLKFESDFDFEKANEKFQEVLVDNLEKLNIED) form the DFDF domain. The FFD box motif lies at 227 to 243 (AFYDKKTSFFDNISCES). A TFG box motif is present at residues 251–271 (TGRPDWKKERETNQETFGHNA). The tract at residues 277–340 (YRRGFGGRGR…QGNTAAAAEQ (64 aa)) is disordered. Gly residues predominate over residues 280–296 (GFGGRGRGGNRGYGGYN). Residues 312-325 (GYRQNNGGYRRGGY) are compositionally biased toward low complexity.

This sequence belongs to the LSM14 family.

It localises to the nucleus. Its function is as follows. Transcriptional regulator. Involved in modulating embryonic expression of ATP-dependent chaperone cdc-48.1. May play a role in mRNA gene silencing, and RNA granule (P-body) assembly. The chain is Protein LSM14 homolog car-1 from Caenorhabditis elegans.